The primary structure comprises 440 residues: Thymidine phosphorylase (440 aa).

This sequence belongs to the thymidine/pyrimidine-nucleoside phosphorylase family. In terms of assembly, homodimer.

It carries out the reaction thymidine + phosphate = 2-deoxy-alpha-D-ribose 1-phosphate + thymine. It participates in pyrimidine metabolism; dTMP biosynthesis via salvage pathway; dTMP from thymine: step 1/2. Its function is as follows. The enzymes which catalyze the reversible phosphorolysis of pyrimidine nucleosides are involved in the degradation of these compounds and in their utilization as carbon and energy sources, or in the rescue of pyrimidine bases for nucleotide synthesis. The polypeptide is Thymidine phosphorylase (Salmonella dublin (strain CT_02021853)).